The following is a 156-amino-acid chain: Ribosomal RNA large subunit methyltransferase H (156 aa).

Residues Leu-73, Gly-104, and 123–128 (LSALTM) each bind S-adenosyl-L-methionine.

This sequence belongs to the RNA methyltransferase RlmH family. As to quaternary structure, homodimer.

It localises to the cytoplasm. The catalysed reaction is pseudouridine(1915) in 23S rRNA + S-adenosyl-L-methionine = N(3)-methylpseudouridine(1915) in 23S rRNA + S-adenosyl-L-homocysteine + H(+). In terms of biological role, specifically methylates the pseudouridine at position 1915 (m3Psi1915) in 23S rRNA. The chain is Ribosomal RNA large subunit methyltransferase H from Tolumonas auensis (strain DSM 9187 / NBRC 110442 / TA 4).